A 405-amino-acid chain; its full sequence is Glucose-1-phosphate adenylyltransferase 1 (405 aa).

Residues Tyr96, Gly161, 176 to 177 (EK), and Ser194 contribute to the alpha-D-glucose 1-phosphate site.

The protein belongs to the bacterial/plant glucose-1-phosphate adenylyltransferase family. Homotetramer.

The catalysed reaction is alpha-D-glucose 1-phosphate + ATP + H(+) = ADP-alpha-D-glucose + diphosphate. Its pathway is glycan biosynthesis; glycogen biosynthesis. Involved in the biosynthesis of ADP-glucose, a building block required for the elongation reactions to produce glycogen. Catalyzes the reaction between ATP and alpha-D-glucose 1-phosphate (G1P) to produce pyrophosphate and ADP-Glc. This is Glucose-1-phosphate adenylyltransferase 1 from Vibrio parahaemolyticus serotype O3:K6 (strain RIMD 2210633).